A 659-amino-acid polypeptide reads, in one-letter code: ATP-binding cassette sub-family D member 3 (659 aa).

Residues 1–61 (MAAFSKYLTA…GKKERAVVDK (61 aa)) are interaction with PEX19. N-linked (GlcNAc...) asparagine glycosylation is present at N12. K61 is modified (N6-acetyllysine). The helical transmembrane segment at 84–104 (GYLVLIAVMLVSRTYCDVWMI) threads the bilayer. The ABC transmembrane type-1 domain maps to 85-372 (YLVLIAVMLV…MLLRMSQALG (288 aa)). N-linked (GlcNAc...) asparagine glycosylation is present at N106. Residues 126-146 (LLNFIAAMPLISLVNNFLKYG) form a helical membrane-spanning segment. N206 is a glycosylation site (N-linked (GlcNAc...) asparagine). The helical transmembrane segment at 224-244 (AIGAQGPASMMAYLVVSGLFL) threads the bilayer. K260 carries the N6-acetyllysine modification. The helical transmembrane segment at 313–333 (MGFIDSIIAKYLATVVGYLVV) threads the bilayer. K399 carries the N6-acetyllysine modification. Residues 440-659 (IKFDHVPLAT…ITEDTVEFGS (220 aa)) form the ABC transporter domain. An ATP-binding site is contributed by 473-480 (GPNGCGKS). K533 bears the N6-acetyllysine mark. S659 carries the post-translational modification Phosphoserine.

This sequence belongs to the ABC transporter superfamily. ABCD family. Peroxisomal fatty acyl CoA transporter (TC 3.A.1.203) subfamily. As to quaternary structure, homodimers. Can form heterodimers with ABCD1 and ABCD2. Dimerization is necessary to form an active transporter. Interacts with PEX19; mediates the targeting of ABCD3 to peroxisomes. In terms of processing, ubiquitinated by PEX2 during pexophagy in response to starvation, leading to its degradation.

The protein localises to the peroxisome membrane. The enzyme catalyses a very long-chain fatty acyl-CoA + H2O = a very long-chain fatty acid + CoA + H(+). It carries out the reaction a very long-chain fatty acid(in) + ATP + H2O = a very long-chain fatty acid(out) + ADP + phosphate + H(+). It catalyses the reaction a long-chain fatty acyl-CoA + H2O = a long-chain fatty acid + CoA + H(+). The catalysed reaction is a long-chain fatty acid(in) + ATP + H2O = a long-chain fatty acid(out) + ADP + phosphate + H(+). The enzyme catalyses pristanoyl-CoA + H2O = 2,6,10,14-tetramethylpentadecanoate + CoA + H(+). It carries out the reaction 2,6,10,14-tetramethylpentadecanoate(in) + ATP + H2O = 2,6,10,14-tetramethylpentadecanoate(out) + ADP + phosphate + H(+). It catalyses the reaction hexadecanedioyl-CoA + H2O = hexadecanedioate + CoA + H(+). The catalysed reaction is hexadecanedioate(in) + ATP + H2O = hexadecanedioate(out) + ADP + phosphate + H(+). The enzyme catalyses (5Z,8Z,11Z,14Z,17Z)-eicosapentaenoyl-CoA + H2O = (5Z,8Z,11Z,14Z,17Z)-eicosapentaenoate + CoA + H(+). It carries out the reaction (5Z,8Z,11Z,14Z,17Z)-eicosapentaenoate(in) + ATP + H2O = (5Z,8Z,11Z,14Z,17Z)-eicosapentaenoate(out) + ADP + phosphate + H(+). It catalyses the reaction (4Z,7Z,10Z,13Z,16Z,19Z)-docosahexaenoyl-CoA + H2O = (4Z,7Z,10Z,13Z,16Z,19Z)-docosahexaenoate + CoA + H(+). The catalysed reaction is (4Z,7Z,10Z,13Z,16Z,19Z)-docosahexaenoate(in) + ATP + H2O = (4Z,7Z,10Z,13Z,16Z,19Z)-docosahexaenoate(out) + ADP + phosphate + H(+). Functionally, broad substrate specificity ATP-dependent transporter of the ATP-binding cassette (ABC) family that catalyzes the transport of long-chain fatty acids (LCFA)-CoA, dicarboxylic acids-CoA, long-branched-chain fatty acids-CoA and bile acids from the cytosol to the peroxisome lumen for beta-oxydation. Has fatty acyl-CoA thioesterase and ATPase activities. Probably hydrolyzes fatty acyl-CoAs into free fatty acids prior to their ATP-dependent transport into peroxisomes. Thus, play a role in regulation of LCFAs and energy metabolism namely, in the degradation and biosynthesis of fatty acids by beta-oxidation. This Homo sapiens (Human) protein is ATP-binding cassette sub-family D member 3.